Reading from the N-terminus, the 89-residue chain is Insulin (89 aa).

3 cysteine pairs are disulfide-bonded: cysteine 7–cysteine 75, cysteine 19–cysteine 88, and cysteine 74–cysteine 79. Positions 33-66 (DVGPLSAFRDLEPPLDTEMEDRFPYRQQLAGSKM) are cleaved as a propeptide — c peptide.

It belongs to the insulin family. As to quaternary structure, heterodimer of a B chain and an A chain linked by two disulfide bonds.

The protein resides in the secreted. Functionally, insulin decreases blood glucose concentration. It increases cell permeability to monosaccharides, amino acids and fatty acids. It accelerates glycolysis, the pentose phosphate cycle, and glycogen synthesis in liver. The chain is Insulin (ins) from Callorhinchus milii (Ghost shark).